A 790-amino-acid chain; its full sequence is Phenylalanine--tRNA ligase beta subunit (790 aa).

Residues 39-147 (AKPFSGIVVG…ADAPVGVDVR (109 aa)) enclose the tRNA-binding domain. One can recognise a B5 domain in the interval 400 to 476 (PAKALVNLRH…RLYGYNKLPV (77 aa)). The Mg(2+) site is built by D454, D460, E463, and E464. One can recognise an FDX-ACB domain in the interval 696 to 789 (SRFPEIRRDL…LGNRFGASLR (94 aa)).

Belongs to the phenylalanyl-tRNA synthetase beta subunit family. Type 1 subfamily. As to quaternary structure, tetramer of two alpha and two beta subunits. It depends on Mg(2+) as a cofactor.

It is found in the cytoplasm. The enzyme catalyses tRNA(Phe) + L-phenylalanine + ATP = L-phenylalanyl-tRNA(Phe) + AMP + diphosphate + H(+). This Hahella chejuensis (strain KCTC 2396) protein is Phenylalanine--tRNA ligase beta subunit.